Consider the following 714-residue polypeptide: T-cell activation Rho GTPase-activating protein (714 aa).

In terms of domain architecture, Rho-GAP spans 88–277 (QPLSIICGEN…FLIDNCFEIF (190 aa)). Disordered stretches follow at residues 290–357 (DDSL…ESSV), 370–419 (QDRR…AEDP), 451–508 (QGHI…HSMS), 520–563 (RTSS…QSQT), and 623–650 (KPST…HRLS). Residues 299–311 (SDVSTLQNDSAYD) are compositionally biased toward polar residues. At S398 the chain carries Phosphoserine. Over residues 459–471 (SRSSPGESLGSSP) the composition is skewed to low complexity. Composition is skewed to basic and acidic residues over residues 492–501 (KTDKTKPQRE) and 527–545 (EKSK…RKES).

As to expression, highly expressed in testis.

Its function is as follows. May function as a GTPase-activating protein. May play a role in transmission ratio distortion (TRD) in mouse, in which heterozygous males for t-locus transmit their t-carrying chromosome to 95% or more of their offspring. This is T-cell activation Rho GTPase-activating protein (Tagap) from Mus musculus (Mouse).